A 141-amino-acid chain; its full sequence is Putative antirestriction protein YubI (141 aa).

It belongs to the antirestriction protein family.

This chain is Putative antirestriction protein YubI (yubI), found in Escherichia coli (strain K12).